Reading from the N-terminus, the 210-residue chain is Uracil phosphoribosyltransferase (210 aa).

Residues arginine 78, arginine 103, and 130-138 contribute to the 5-phospho-alpha-D-ribose 1-diphosphate site; that span reads DPMLATGGS. Uracil contacts are provided by residues isoleucine 193 and 198–200; that span reads GDA. Aspartate 199 provides a ligand contact to 5-phospho-alpha-D-ribose 1-diphosphate.

It belongs to the UPRTase family. Mg(2+) serves as cofactor.

The catalysed reaction is UMP + diphosphate = 5-phospho-alpha-D-ribose 1-diphosphate + uracil. It functions in the pathway pyrimidine metabolism; UMP biosynthesis via salvage pathway; UMP from uracil: step 1/1. Allosterically activated by GTP. Catalyzes the conversion of uracil and 5-phospho-alpha-D-ribose 1-diphosphate (PRPP) to UMP and diphosphate. The polypeptide is Uracil phosphoribosyltransferase (Salinibacter ruber (strain DSM 13855 / M31)).